We begin with the raw amino-acid sequence, 440 residues long: Peroxisome proliferator-activated receptor delta (440 aa).

The tract at residues 1-53 is disordered; the sequence is MEQPQEETPEAREEEKEEVAMGDGAPELNGGPEHTLPSSSCADLSQNSSPSSL. The span at 36–53 shows a compositional bias: polar residues; it reads LPSSSCADLSQNSSPSSL. Residues 70-144 constitute a DNA-binding region (nuclear receptor); sequence NMECRVCGDK…LGMSHNAIRF (75 aa). NR C4-type zinc fingers lie at residues 73-93 and 110-132; these read CRVC…CEGC and CDRI…FQKC. The NR LBD domain maps to 210–438; sequence FVIHDIETLW…HPLLQEIYKD (229 aa).

This sequence belongs to the nuclear hormone receptor family. NR1 subfamily. In terms of assembly, heterodimer with the retinoid X receptor. Interacts (via domain NR LBD) with CRY1 and CRY2 in a ligand-dependent manner. In terms of processing, 'Lys-48'-linked polyubiquitinated; leading to proteasomal degradation. Deubiquitinated and stabilized by OTUD3. Heart, adrenal and intestine.

The protein localises to the nucleus. In terms of biological role, ligand-activated transcription factor key mediator of energy metabolism in adipose tissues. Receptor that binds peroxisome proliferators such as hypolipidemic drugs and fatty acids. Has a preference for poly-unsaturated fatty acids, such as gamma-linoleic acid and eicosapentanoic acid. Once activated by a ligand, the receptor binds to promoter elements of target genes. Regulates the peroxisomal beta-oxidation pathway of fatty acids. Functions as transcription activator for the acyl-CoA oxidase gene. Decreases expression of NPC1L1 once activated by a ligand. This chain is Peroxisome proliferator-activated receptor delta (Ppard), found in Mus musculus (Mouse).